A 37-amino-acid chain; its full sequence is Photosystem II reaction center protein K (37 aa).

The Lumenal segment spans residues 1-15 (KLPEAYAIFDPLVDV). A helical membrane pass occupies residues 16–30 (LPVIPVLFFALAFVV). At 31 to 37 (QAAVGFR) the chain is on the cytoplasmic side.

The protein belongs to the PsbK family. PSII is composed of 1 copy each of membrane proteins PsbA, PsbB, PsbC, PsbD, PsbE, PsbF, PsbH, PsbI, PsbJ, PsbK, PsbL, PsbM, PsbT, PsbX, PsbY, PsbZ, Psb30/Ycf12, peripheral proteins PsbO, CyanoQ (PsbQ), PsbU, PsbV and a large number of cofactors. It forms dimeric complexes. Requires PSII binds multiple chlorophylls, carotenoids and specific lipids. as cofactor.

It is found in the cellular thylakoid membrane. Its function is as follows. One of the components of the core complex of photosystem II (PSII). PSII is a light-driven water:plastoquinone oxidoreductase that uses light energy to abstract electrons from H(2)O, generating O(2) and a proton gradient subsequently used for ATP formation. It consists of a core antenna complex that captures photons, and an electron transfer chain that converts photonic excitation into a charge separation. In Thermostichus vulcanus (Synechococcus vulcanus), this protein is Photosystem II reaction center protein K.